Consider the following 146-residue polypeptide: Large ribosomal subunit protein uL15 (146 aa).

The segment at 1 to 46 is disordered; sequence MAIELHDLKPAPGAHKAKTRVGRGEGSKGKTAGRGTKGTGARKNVP. The span at 29–43 shows a compositional bias: low complexity; sequence GKTAGRGTKGTGARK.

Belongs to the universal ribosomal protein uL15 family. Part of the 50S ribosomal subunit.

Functionally, binds to the 23S rRNA. The protein is Large ribosomal subunit protein uL15 of Cutibacterium acnes (strain DSM 16379 / KPA171202) (Propionibacterium acnes).